Reading from the N-terminus, the 281-residue chain is NAD-dependent protein deacetylase 3 (281 aa).

Residues 1–281 form the Deacetylase sirtuin-type domain; it reads MLDSPTLDLL…PWLAEQLITR (281 aa). NAD(+)-binding positions include 27–47 and 105–108; these read GAGI…GVRR and QNVD. H123 serves as the catalytic Proton acceptor. Positions 131, 134, 182, and 185 each coordinate Zn(2+). NAD(+) is bound by residues 223 to 225, 249 to 251, and C267; these read GTS and NHG.

The protein belongs to the sirtuin family. Class II subfamily. Zn(2+) serves as cofactor.

Its subcellular location is the cytoplasm. It carries out the reaction N(6)-acetyl-L-lysyl-[protein] + NAD(+) + H2O = 2''-O-acetyl-ADP-D-ribose + nicotinamide + L-lysyl-[protein]. In terms of biological role, NAD-dependent protein deacetylase which modulates the activities of several enzymes which are inactive in their acetylated form. In Pseudomonas syringae pv. tomato (strain ATCC BAA-871 / DC3000), this protein is NAD-dependent protein deacetylase 3.